Reading from the N-terminus, the 681-residue chain is Long-chain-fatty-acid--CoA ligase heimdall (681 aa).

Residues 223–231 (TSGTVGMPK), 414–419 (ECYGMS), aspartate 491, arginine 506, and lysine 639 each bind ATP.

It belongs to the ATP-dependent AMP-binding enzyme family. Bubblegum subfamily.

It catalyses the reaction a long-chain fatty acid + ATP + CoA = a long-chain fatty acyl-CoA + AMP + diphosphate. Mediates activation of long-chain fatty acids for both synthesis of cellular lipids, and degradation via beta-oxidation. Probably by regulating lipid storage and catabolism, plays a role in neuronal function. This chain is Long-chain-fatty-acid--CoA ligase heimdall, found in Drosophila melanogaster (Fruit fly).